An 86-amino-acid polypeptide reads, in one-letter code: Cell division topological specificity factor (86 aa).

The protein belongs to the MinE family.

Its function is as follows. Prevents the cell division inhibition by proteins MinC and MinD at internal division sites while permitting inhibition at polar sites. This ensures cell division at the proper site by restricting the formation of a division septum at the midpoint of the long axis of the cell. The polypeptide is Cell division topological specificity factor (Photobacterium profundum (strain SS9)).